Here is a 249-residue protein sequence, read N- to C-terminus: Protein YIPF4 (249 aa).

A compositionally biased stretch (pro residues) spans 1–15 (MQPPGPQQPPPPPLF). The interval 1–40 (MQPPGPQQPPPPPLFTPNNGDFTFVSSADAEDPSGSITTP) is disordered. The Cytoplasmic portion of the chain corresponds to 1-116 (MQPPGPQQPP…LGFNRQVVRD (116 aa)). Residues 16-26 (TPNNGDFTFVS) are compositionally biased toward polar residues. The helical transmembrane segment at 117 to 137 (NPDFWGPLAVVLFFSMISLYG) threads the bilayer. Residue Q138 is a topological domain, lumenal. Residues 139–159 (FKVVSWIITIWIFGSLTIFLL) form a helical membrane-spanning segment. The Cytoplasmic segment spans residues 160–171 (ARVLGGEVAYGQ). The helical transmembrane segment at 172 to 192 (VLGVIGYSLLPLIVIAPVLLV) threads the bilayer. Topologically, residues 193-200 (VGSFEVVS) are lumenal. Residues 201–221 (TLIKLFGVFWAAYSAASLLVG) traverse the membrane as a helical segment. Residues 222–228 (EEFKTKK) are Cytoplasmic-facing. Residues 229–249 (PLLIYPIFLLYIYFLSLYTGV) traverse the membrane as a helical segment.

The protein belongs to the YIP1 family.

The protein localises to the golgi apparatus. The protein resides in the cis-Golgi network membrane. In terms of biological role, involved in the maintenance of the Golgi structure. This is Protein YIPF4 (YIPF4) from Gallus gallus (Chicken).